A 146-amino-acid chain; its full sequence is Hemoglobin subunit beta (146 aa).

A Globin domain is found at 2–146 (HWTAEEKQLI…VAHALARKYH (145 aa)). The heme b site is built by H63 and H92.

This sequence belongs to the globin family. Heterotetramer of two alpha chains and two beta chains. Red blood cells.

Its function is as follows. Involved in oxygen transport from the lung to the various peripheral tissues. This Ara ararauna (Blue-and-yellow macaw) protein is Hemoglobin subunit beta (HBB).